Consider the following 253-residue polypeptide: MLTGVTRQKILITGASSGLGAGMARSFAAQGRDLALCARRTDRLTELKAELSQRYPDIKIAVAELDVNDHERVPKVFAELSDEIGGIDRVIVNAGIGKGARLGSGKLWANKATIETNLVAALVQIETALDMFNQRGSGHLVLISSVLGVKGVPGVKAAYAASKAGVRSLGESLRAEYAQRPIRVTVLEPGYIESEMTAKSASTMLMVDNATGVKALVAAIEREPGRAAVPWWPWAPLVRLMWVLPPRLTRRFA.

Ser-145 serves as a coordination point for substrate. Tyr-159 (proton acceptor) is an active-site residue.

This sequence belongs to the short-chain dehydrogenases/reductases (SDR) family.

This is an uncharacterized protein from Mycobacterium tuberculosis (strain CDC 1551 / Oshkosh).